Reading from the N-terminus, the 460-residue chain is Cysteine--tRNA ligase (460 aa).

Residue C27 participates in Zn(2+) binding. The 'HIGH' region signature appears at 29 to 39 (PTVYDLIHVGN). Positions 207, 232, and 236 each coordinate Zn(2+). A 'KMSKS' region motif is present at residues 264–268 (KMSKS). K267 is an ATP binding site.

This sequence belongs to the class-I aminoacyl-tRNA synthetase family. Monomer. Requires Zn(2+) as cofactor.

The protein localises to the cytoplasm. The catalysed reaction is tRNA(Cys) + L-cysteine + ATP = L-cysteinyl-tRNA(Cys) + AMP + diphosphate. The sequence is that of Cysteine--tRNA ligase from Thermotoga petrophila (strain ATCC BAA-488 / DSM 13995 / JCM 10881 / RKU-1).